Consider the following 551-residue polypeptide: Podocalyxin (551 aa).

Positions 1 to 21 (MRSALALAALLLLLLSPPSLS) are cleaved as a signal peptide. A disordered region spans residues 18–324 (PSLSQEKSPQ…QRVSCGPPER (307 aa)). At 22 to 452 (QEKSPQPGPT…PPEETEDRFS (431 aa)) the chain is on the extracellular side. Residues 32 to 59 (PMATSTSTRPAPASAPAPKSSVAASVPA) are compositionally biased toward low complexity. Residues 60 to 90 (EQNTTPMTTKAPATQSPSASPGSSVENSAPA) show a composition bias toward polar residues. Low complexity predominate over residues 91–104 (QGSTTTQQSLSVTT). Residues 142–164 (APSNHSITTKPLATEATSQAPRQ) show a composition bias toward polar residues. 2 N-linked (GlcNAc...) asparagine glycosylation sites follow: N145 and N180. The span at 234–244 (PVASSAETQGM) shows a compositional bias: polar residues. Low complexity predominate over residues 289–300 (TSSSTELASTAL). The N-linked (GlcNAc...) asparagine glycan is linked to N333. Residues 453–473 (LPLIITIVCMASFLLLVAALY) form a helical membrane-spanning segment. Residues 474–551 (GCCHQRLSHR…DLDEEEDTHL (78 aa)) are Cytoplasmic-facing. T511 bears the Phosphothreonine mark. S530 is modified (phosphoserine). The residue at position 549 (T549) is a Phosphothreonine.

Belongs to the podocalyxin family. In terms of assembly, monomer; when associated with the membrane raft. Oligomer; when integrated in the apical membrane. Found in a complex with EZR, PODXL and NHERF2. Associates with the actin cytoskeleton through complex formation with EZR and NHERF2. Interacts (via the C-terminal PDZ-binding motif DTHL) with NHERF1 (via the PDZ domains); interaction is not detected in glomerular epithelium cells, take place early in the secretory pathway and is necessary for its apical membrane sorting. Interacts (via the C-terminal PDZ-binding motif DTHL) with NHERF2 (via the PDZ 1 domain); interaction is detected in glomerular epithelium cells. Interacts with EZR. In terms of processing, N- and O-linked glycosylated. Sialoglycoprotein. In terms of tissue distribution, glomerular epithelium cell (podocyte) and endothelial cells.

The protein localises to the apical cell membrane. Its subcellular location is the cell projection. It localises to the microvillus. It is found in the membrane raft. The protein resides in the lamellipodium. The protein localises to the filopodium. Its subcellular location is the ruffle. It localises to the membrane. Involved in the regulation of both adhesion and cell morphology and cancer progression. Functions as an anti-adhesive molecule that maintains an open filtration pathway between neighboring foot processes in the podocyte by charge repulsion. Acts as a pro-adhesive molecule, enhancing the adherence of cells to immobilized ligands, increasing the rate of migration and cell-cell contacts in an integrin-dependent manner. Induces the formation of apical actin-dependent microvilli. Involved in the formation of a preapical plasma membrane subdomain to set up initial epithelial polarization and the apical lumen formation during renal tubulogenesis. Plays a role in cancer development and aggressiveness by inducing cell migration and invasion through its interaction with the actin-binding protein EZR. Affects EZR-dependent signaling events, leading to increased activities of the MAPK and PI3K pathways in cancer cells. This Oryctolagus cuniculus (Rabbit) protein is Podocalyxin (PODXL).